The primary structure comprises 4001 residues: Ankyrin repeat and KH domain-containing protein mask (4001 aa).

The span at 1–14 shows a compositional bias: basic and acidic residues; the sequence is MNNDAKNHESDDLN. Disordered regions lie at residues 1-61, 91-174, and 391-494; these read MNND…NRQL, KNEP…GGGS, and DTDT…FLLD. Polar residues predominate over residues 15 to 30; that stretch reads VRSTAYFNQQTTTNQP. Residues 38-61 show a composition bias toward low complexity; the sequence is NNTGSGSGSNNNNNNTNQNPNRQL. Polar residues predominate over residues 94-117; that stretch reads PLTTTESSGVLTNTPLPSNSRLKV. Residues 118-159 are compositionally biased toward low complexity; that stretch reads NNNNNTNNTAKMSGTSSSQSSATPTPPTASSSTTTTTTTNIS. The segment covering 160–174 has biased composition (gly residues); sequence TGGGGSGSSGGGGGS. Acidic residues-rich tracts occupy residues 408–425 and 434–486; these read SESEEESVSEDDIPESDP and VRED…EDAP. Ser-501 bears the Phosphoserine mark. ANK repeat units follow at residues 546 to 575, 584 to 614, 618 to 647, 651 to 680, 684 to 713, 718 to 747, 751 to 780, 784 to 813, 817 to 846, 851 to 880, 881 to 910, 914 to 943, 947 to 976, 981 to 1011, and 1014 to 1043; these read SGFSRSLVAACTDNDVNTVKRLLCKGNVNL, DGESLLSMACSAGYYELAQVLLAMSAAQVED, KDSTPLMEAASAGHLDIVKLLLNHNADVNA, TGNTPLMFACAGGQVDVVKVLLKHGANVEE, NGHTPLMEAASAGHVEVAKVLLEHGAGINT, FKESALTLACYKGHLDMVRFLLQAGADQEH, EMHTALMEASMDGHVEVARLLLDSGAQVNM, SFESPLTLAACGGHVELATLLIERGANIEE, EGYTPLMEAAREGHEEMVALLLSKGANINA, TQETALTLACCGGFMEVAAFLIKEGANLEL, GASTPLMEASQEGHTDLVSFLLKKKANVHA, TGDTALTHACENGHTDAAGVLLSYGAELEH, GGRTPLMKACRAGHLCTVKFLIQKGANVNK, NDHTALSLACAGGHQSVVELLLKNNADPFHK, and DNSTMLIEASKGGHTRVVELLFRYPNISPT. Disordered regions lie at residues 1046-1067 and 1306-1376; these read AASANVTQAAPTSNQPGPNQMR and QPGE…PTAL. Over residues 1367–1376 the composition is skewed to polar residues; sequence DNNQPVPTAL. 2 positions are modified to phosphoserine: Ser-1389 and Ser-1588. Disordered regions lie at residues 1583–1612, 1646–1669, 1682–1779, 1852–1872, 2084–2108, and 2225–2256; these read GDQPKSPTETPPEMEETTMSSPTEADRLGS, SDLESECEDDAEGGAGADCEENTL, EDGI…SLPL, VVHQKQQHGEGDQQCEDDGSA, MAQHQAQQQQGVGEPLTEQQQQQLH, and TPAPSSGVSSTKSMPGGIAKKAIDKQSRKERR. Composition is skewed to acidic residues over residues 1646–1657, 1685–1704, and 1716–1759; these read SDLESECEDDAE, IIVEEEEDDEEEDDDDEEQD, and DDED…EPDS. The segment covering 1760–1776 has biased composition (low complexity); the sequence is DQGTGNNNNNSKSGASS. Over residues 2084–2093 the composition is skewed to low complexity; it reads MAQHQAQQQQ. Residues 2228–2237 show a composition bias toward polar residues; the sequence is PSSGVSSTKS. ANK repeat units lie at residues 2312 to 2341, 2345 to 2374, 2379 to 2408, 2412 to 2441, 2447 to 2476, 2481 to 2510, 2514 to 2543, 2549 to 2578, 2582 to 2611, and 2615 to 2644; these read NHDTALTLACAGGHEELVELLINRGANIEH, KGFTPLILAATAGHDKVVDILLKHSAELEA, TKDTPLSLACSGGRYEVVELLLSVGANKEH, SDYTPLSLAASGGYVNIIKLLLSHGAEINS, LGISPLMLAAMNGHTPAVKLLLDQGSDINA, NRNTALTLACFQGRHEVVSLLLDRRANVEH, TGLTPLMEAASGGYIEVGRVLLDKGADVNA, SRDTALTIAADKGHQKFVELLLSRNASVEV, KGNSPLWLAAHGGHLSVVELLYDHNADIDS, and RRVSCLMAAFRKGHTKIVKWMVQYVSQFPS. The stretch at 2674-2732 forms a coiled coil; sequence AKEAQAVKANKNASILLEELDLERTREESRKAAAARRRERKKKKKMEKKEEKRRQQQGN. At Ser-2687 the chain carries Phosphoserine. Thr-2698 carries the post-translational modification Phosphothreonine. The interval 2699–3033 is disordered; that stretch reads REESRKAAAA…TSTTTAASSV (335 aa). A compositionally biased stretch (basic residues) spans 2706–2719; that stretch reads AAARRRERKKKKKM. The segment covering 2739–2762 has biased composition (acidic residues); the sequence is MQGDDDDASDKDDDSDKDDEDEEA. Phosphoserine occurs at positions 2747 and 2753. The span at 2793–2810 shows a compositional bias: low complexity; that stretch reads SQSAQAAEAAANSVSTNS. Polar residues predominate over residues 2828-2839; the sequence is EPTQPVITSNSV. The span at 2868 to 2886 shows a compositional bias: basic and acidic residues; the sequence is RQLDVKKEEPALKKKEEKN. Positions 2906-2941 are enriched in low complexity; the sequence is ALPAKQQPSSSSKLQSSESASNINSSTATNTSSANT. Over residues 2950 to 2960 the composition is skewed to polar residues; that stretch reads ASQTASATTLN. The span at 2963-2975 shows a compositional bias: basic and acidic residues; the sequence is KRTEVDGWKEVVR. Residues 2995-3004 are compositionally biased toward polar residues; sequence TATSSATSVQ. The span at 3012-3032 shows a compositional bias: low complexity; that stretch reads ANSSSNSSSSLTTSTTTAASS. The KH domain maps to 3036–3100; that stretch reads MTCKKVQVPV…DATKQAHMLI (65 aa). Low complexity-rich tracts occupy residues 3156 to 3178, 3195 to 3227, and 3244 to 3257; these read ASTTSTSSSSSASSTTPAGASYS, SGRSSTSVKSNGSSTKVSASSGSGSRSGRAGSS, and NGVIKSKSESSSKS. 4 disordered regions span residues 3156-3329, 3383-3457, 3520-3636, and 3744-3786; these read ASTT…GQGG, KPIA…QTSQ, AVGD…PPTA, and IFPQ…GGAA. The segment covering 3262-3278 has biased composition (polar residues); sequence QKSSTTLGKSSTVSPGA. Residues 3396–3416 are compositionally biased toward low complexity; it reads GSPTQVQQQHQTQQQQQQQLP. Residues 3417 to 3427 are compositionally biased toward pro residues; the sequence is QPAPVPGPQPQ. Residues 3428-3457 show a composition bias toward low complexity; it reads QQPLQQQQQQQAPQQQPQQPNQQQQPQTSQ. Positions 3539–3559 are enriched in polar residues; the sequence is NILSSPVGSSKASSNHSTSPP. Residues 3565–3577 are compositionally biased toward low complexity; the sequence is QQQQQQQPQSSQQ. Phosphoserine is present on Ser-3596. The span at 3774–3786 shows a compositional bias: low complexity; the sequence is PPGTGARQPGGAA. 3 positions are modified to phosphoserine: Ser-3820, Ser-3822, and Ser-3825. Residues 3876-3945 form a disordered region; it reads KAQPPGLQQP…HNMQAPPNMS (70 aa). The span at 3891 to 3910 shows a compositional bias: low complexity; the sequence is SQQQQQQPLNWLKQQPQQQQ.

May interact with Unc-89 (via protein kinase domain 1 or 2). As to expression, expressed ubiquitously in eye imaginal disk, slightly higher expression is seen in presumptive photoreceptors. Expressed in indirect flight muscle (IFM) (at protein level).

The protein localises to the cytoplasm. It localises to the myofibril. It is found in the sarcomere. The protein resides in the z line. Its subcellular location is the m line. Functionally, mediator of receptor tyrosine kinase (RTK) signaling, and may act either downstream of MAPK or transduce signaling through a parallel branch of the RTK pathway. Required for the development and organization of indirect flight muscle sarcomeres by regulating the formation of M line and H zone and the correct assembly of thick and thin filaments in the sarcomere. This is Ankyrin repeat and KH domain-containing protein mask from Drosophila melanogaster (Fruit fly).